Reading from the N-terminus, the 87-residue chain is Small ribosomal subunit protein uS17 (87 aa).

Belongs to the universal ribosomal protein uS17 family. Part of the 30S ribosomal subunit.

Functionally, one of the primary rRNA binding proteins, it binds specifically to the 5'-end of 16S ribosomal RNA. The protein is Small ribosomal subunit protein uS17 of Bacillus cereus (strain ATCC 14579 / DSM 31 / CCUG 7414 / JCM 2152 / NBRC 15305 / NCIMB 9373 / NCTC 2599 / NRRL B-3711).